Here is a 166-residue protein sequence, read N- to C-terminus: Sperm-egg fusion protein TMEM95 (166 aa).

An N-terminal signal peptide occupies residues 1 to 16 (MWTLALGGIFLAAVEA). Disulfide bonds link Cys17–Cys118, Cys20–Cys121, Cys105–Cys128, and Cys109–Cys134. Residues 17 to 145 (CVFCRFPDRE…PGSHDLWEAR (129 aa)) are Extracellular-facing. N-linked (GlcNAc...) asparagine glycosylation occurs at Asn117. A helical membrane pass occupies residues 146–165 (ILLLFVCGTALLLGVPSLAV). Position 166 (Glu166) is a topological domain, cytoplasmic.

Belongs to the TMEM95 family. In terms of assembly, does not interact with sperm-egg fusion proteins IZUMO1 or IZUMO1R/JUNO. In terms of processing, N-glycosylated. As to expression, detected in testis and brain with higher levels in brain than testis.

The protein resides in the cytoplasmic vesicle. The protein localises to the secretory vesicle. Its subcellular location is the acrosome membrane. In terms of biological role, sperm protein required for fusion of sperm with the egg membrane during fertilization. This chain is Sperm-egg fusion protein TMEM95, found in Bos taurus (Bovine).